Reading from the N-terminus, the 701-residue chain is Serologically defined colon cancer antigen 8 homolog (701 aa).

Positions Met-1–Leu-13 are enriched in acidic residues. Disordered stretches follow at residues Met-1–Ser-67 and Ala-84–Asn-114. Polar residues predominate over residues Ser-45–Ser-67. 3 coiled-coil regions span residues Ile-119–Tyr-173, His-203–Ala-258, and Gln-323–Arg-695. Residues Leu-364 to Glu-387 form a disordered region.

The protein resides in the cytoplasm. The protein localises to the cytoskeleton. Its subcellular location is the microtubule organizing center. It is found in the centrosome. It localises to the centriole. The protein resides in the cilium basal body. The protein localises to the cell junction. Functionally, plays a role in the establishment of cell polarity and epithelial lumen formation. Also plays an essential role in ciliogenesis and subsequent Hedgehog signaling pathway that requires the presence of intact primary cilia for pathway activation. Mechanistically, interacts with and mediates RABEP2 centrosomal localization which is critical for ciliogenesis. The chain is Serologically defined colon cancer antigen 8 homolog (Sdccag8) from Danio rerio (Zebrafish).